Consider the following 347-residue polypeptide: Probable dual-specificity RNA methyltransferase RlmN (347 aa).

Glu94 functions as the Proton acceptor in the catalytic mechanism. The Radical SAM core domain occupies 100 to 334; it reads TETRTTACVS…AKVRHSRGKD (235 aa). An intrachain disulfide couples Cys107 to Cys339. Positions 114, 118, and 121 each coordinate [4Fe-4S] cluster. S-adenosyl-L-methionine contacts are provided by residues 165-166, Ser197, 220-222, and Asn296; these read GE and SLH. Cys339 acts as the S-methylcysteine intermediate in catalysis.

This sequence belongs to the radical SAM superfamily. RlmN family. The cofactor is [4Fe-4S] cluster.

It is found in the cytoplasm. It carries out the reaction adenosine(2503) in 23S rRNA + 2 reduced [2Fe-2S]-[ferredoxin] + 2 S-adenosyl-L-methionine = 2-methyladenosine(2503) in 23S rRNA + 5'-deoxyadenosine + L-methionine + 2 oxidized [2Fe-2S]-[ferredoxin] + S-adenosyl-L-homocysteine. The enzyme catalyses adenosine(37) in tRNA + 2 reduced [2Fe-2S]-[ferredoxin] + 2 S-adenosyl-L-methionine = 2-methyladenosine(37) in tRNA + 5'-deoxyadenosine + L-methionine + 2 oxidized [2Fe-2S]-[ferredoxin] + S-adenosyl-L-homocysteine. Specifically methylates position 2 of adenine 2503 in 23S rRNA and position 2 of adenine 37 in tRNAs. The chain is Probable dual-specificity RNA methyltransferase RlmN from Flavobacterium psychrophilum (strain ATCC 49511 / DSM 21280 / CIP 103535 / JIP02/86).